The primary structure comprises 285 residues: Bifunctional protein FolD (285 aa).

NADP(+) is bound by residues 166 to 168, Ser-191, and Ile-232; that span reads GRS.

The protein belongs to the tetrahydrofolate dehydrogenase/cyclohydrolase family. As to quaternary structure, homodimer.

The catalysed reaction is (6R)-5,10-methylene-5,6,7,8-tetrahydrofolate + NADP(+) = (6R)-5,10-methenyltetrahydrofolate + NADPH. It carries out the reaction (6R)-5,10-methenyltetrahydrofolate + H2O = (6R)-10-formyltetrahydrofolate + H(+). It functions in the pathway one-carbon metabolism; tetrahydrofolate interconversion. Its function is as follows. Catalyzes the oxidation of 5,10-methylenetetrahydrofolate to 5,10-methenyltetrahydrofolate and then the hydrolysis of 5,10-methenyltetrahydrofolate to 10-formyltetrahydrofolate. The sequence is that of Bifunctional protein FolD from Rickettsia typhi (strain ATCC VR-144 / Wilmington).